The primary structure comprises 323 residues: CD-NTase-associated protein 12 (323 aa).

One can recognise a TIR domain in the interval 4–120 (RIFIGSSSEQ…LDGITVAKFT (117 aa)). Glu-84 is a catalytic residue. The interval 154 to 323 (STALAIGYYN…YVNVLTNVKL (170 aa)) is STING domain. Ser-164, Phe-165, Arg-234, Pro-237, Asp-259, Ser-262, and Thr-263 together coordinate 3',3'-c-di-GMP.

This sequence in the C-terminal section; belongs to the bacterial STING family. As to quaternary structure, forms homodimers which subsequently form filaments. In vitro in the presence of c-di-GMP forms filaments up to 300 nm in length with an ordered array of parallel-stacked subunits, where the TIR domains form one face of the filament and the STING domains form the other face. Antiparallel double-filament structures are also seen. 3'3'-cGAMP weakly induces filament formation, while 2'3'-cGAMP does not.

The enzyme catalyses NAD(+) + H2O = ADP-D-ribose + nicotinamide + H(+). NAD(+) hydrolase activity is strongly stimulated by c-di-GMP, weakly by 3'3'-cGAMP, very weakly by c-di-AMP and not at all by 2'3'-cGAMP. Self-association of TIR domains is required for NADase activity. In terms of biological role, effector protein of a CBASS antiviral system with NAD(+) hydrolase activity. CBASS (cyclic oligonucleotide-based antiphage signaling system) provides immunity against bacteriophage. The CD-NTase protein synthesizes cyclic nucleotides in response to infection; these serve as specific second messenger signals. The signals activate a diverse range of effectors, leading to bacterial cell death and thus abortive phage infection. A type I-D(GG) CBASS system. Its function is as follows. Upon activation by 3'3'-c-di-GMP forms filaments which hydrolyze NAD(+); filament formation is required for enzyme activation. Induction in an E.coli strain that synthesizes c-di-GMP leads to significant growth inhibition. Binds c-di-GMP and 3'3'-cGAMP (3'3'-cyclic GMP-AMP), but not c-di-AMP, 2'3'-cGAMP or cUMP-AMP. The sequence is that of CD-NTase-associated protein 12 from Sphingobacterium faecium (strain DSM 11690 / JCM 21820 / NBRC 15299 / NCIMB 13408 / KS 0470).